The primary structure comprises 199 residues: uncharacterized protein (199 aa).

A signal peptide spans 1–23 (MSARAPKELRLALPPCLLNRTFA). Residues asparagine 19 and asparagine 26 are each glycosylated (N-linked (GlcNAc...) asparagine). Residues 24-60 (SHNASGGSSAGLRSSGAGGGTCITQVGQQLFQSFSST) lie on the Extracellular side of the membrane. A helical membrane pass occupies residues 61-81 (LVLIVLVTLIFCLLVLSLSTF). At 82–199 (HIHKRRMKKR…EGLLQTVVLS (118 aa)) the chain is on the cytoplasmic side. Residues 93–190 (MQRAQEEYER…ASSCLDTPGE (98 aa)) are disordered. Basic and acidic residues-rich tracts occupy residues 95-106 (RAQEEYERDHCS) and 124-135 (HGKETRLERQPR). Residues 147–163 (SSSSSSSSSPGLLCQGP) are compositionally biased toward low complexity. Pro residues predominate over residues 164 to 176 (CAPPPPLPAPTPQ).

The protein localises to the membrane. This is an uncharacterized protein from Mus musculus (Mouse).